The sequence spans 544 residues: Chaperonin GroEL (544 aa).

Residues 30 to 33, Lys51, 87 to 91, Gly415, 481 to 483, and Asp497 contribute to the ATP site; these read TLGP, DGTTT, and DAL.

Belongs to the chaperonin (HSP60) family. Forms a cylinder of 14 subunits composed of two heptameric rings stacked back-to-back. Interacts with the co-chaperonin GroES.

The protein resides in the cytoplasm. It catalyses the reaction ATP + H2O + a folded polypeptide = ADP + phosphate + an unfolded polypeptide.. Functionally, together with its co-chaperonin GroES, plays an essential role in assisting protein folding. The GroEL-GroES system forms a nano-cage that allows encapsulation of the non-native substrate proteins and provides a physical environment optimized to promote and accelerate protein folding. The sequence is that of Chaperonin GroEL from Chlamydia trachomatis serovar D (strain ATCC VR-885 / DSM 19411 / UW-3/Cx).